Reading from the N-terminus, the 403-residue chain is Vitamin D(3) 25-hydroxylase (403 aa).

Heme is bound at residue Cys-347.

This sequence belongs to the cytochrome P450 family. The cofactor is heme.

The protein localises to the cytoplasm. The catalysed reaction is 5beta-cholestane-3alpha,7alpha,12alpha-triol + 6 reduced [adrenodoxin] + 3 O2 + 5 H(+) = (25R)-3alpha,7alpha,12alpha-trihydroxy-5beta-cholestan-26-oate + 6 oxidized [adrenodoxin] + 4 H2O. With respect to regulation, activated by partially methylated beta-cyclodextrin. Functionally, hydroxylates vitamin D(3) into 25-hydroxyvitamin D(3) and 1-alpha,25-dihydroxyvitamin D(3), its physiologically active forms. It first hydroxylates the C-25 position of vitamin D(3) to form 25-hydroxyvitamin D(3), then subsequently hydroxylates the C-1-alpha position to form 1-alpha,25-dihydroxyvitamin D(3). Also displays 25-hydroxylase activity on vitamin D(2) and 7-dehydrocholesterol. May play a role in the biosynthesis of steroid metabolic intermediates. The protein is Vitamin D(3) 25-hydroxylase of Pseudonocardia autotrophica (Amycolata autotrophica).